Reading from the N-terminus, the 171-residue chain is Apoptosis regulator Bcl-2 homolog (171 aa).

In terms of assembly, interacts with host BECN1; this interaction inhibits host autophagy. Interacts with host BAK1 and BAX.

It is found in the host cytoplasm. Plays a role in the protection against apoptosis mediated by cytotoxic cells during the immune response to acute and persistent viral infection. Contributes therefore to latency establishment. Plays also a role in the inhibition of host starvation-induced autophagy which ultimately contributes to the viral chronic infection. The polypeptide is Apoptosis regulator Bcl-2 homolog (vBCL2) (Murid herpesvirus 4 (MuHV-4)).